The chain runs to 1322 residues: Protein fantom (1322 aa).

Positions 1-22 (MVSARYPIEKWSRPQLEDHFHN) are cleaved as a signal peptide. Residues 15–89 (QLEDHFHNVV…MKLKAAKQQL (75 aa)) are a coiled coil. Over residues 108-119 (RSTFRQPPSTFR) the composition is skewed to polar residues. Disordered regions lie at residues 108 to 151 (RSTF…GEKL), 189 to 275 (KSSV…PDQT), and 392 to 418 (RIEE…SQSE). Low complexity predominate over residues 195–217 (SSPPTRLSTSSSSKSSSSNNNND). Over residues 224–234 (ELEEMSEMSDD) the composition is skewed to acidic residues. A coiled-coil region spans residues 274 to 362 (QTEKVLLDKL…EDQKKFEAMR (89 aa)). Residues 456–538 (ASENSLARWQ…FMLEEQIRTI (83 aa)) are a coiled coil. Disordered regions lie at residues 891–1094 (AELH…KPRN) and 1121–1149 (TDPL…PVPL). The span at 918 to 927 (TDSSDTSFSH) shows a compositional bias: low complexity. A compositionally biased stretch (acidic residues) spans 956–975 (SDGEEEADRIVFDDDDDEIE). Residues 984-996 (RDPEPLEVPERQV) show a composition bias toward basic and acidic residues. The segment covering 1015–1029 (NGTNESKESTPVTQR) has biased composition (polar residues). Acidic residues predominate over residues 1042-1067 (PELEPESGPEPEPVVESEPNEVAETE). Positions 1068-1080 (EDRKRELKTEELK) are enriched in basic and acidic residues. The segment covering 1127–1139 (SVPPSESSSTSSP) has biased composition (low complexity).

It belongs to the RPGRIP1 family. Expressed at the transition zone at the base of cilia. Expressed in ciliated sensory neurons, including the amphid neurons in the head.

Its subcellular location is the cell projection. The protein localises to the cilium. In terms of biological role, thought to have an important role in cilia formation and cilia-mediated chemosensation. Involved in the docking of other MKS/MKSR proteins localized to the transition zone of the cilia. The protein is Protein fantom (mks-5) of Caenorhabditis elegans.